A 571-amino-acid chain; its full sequence is Proline--tRNA ligase (571 aa).

The protein belongs to the class-II aminoacyl-tRNA synthetase family. ProS type 1 subfamily. Homodimer.

Its subcellular location is the cytoplasm. The enzyme catalyses tRNA(Pro) + L-proline + ATP = L-prolyl-tRNA(Pro) + AMP + diphosphate. Functionally, catalyzes the attachment of proline to tRNA(Pro) in a two-step reaction: proline is first activated by ATP to form Pro-AMP and then transferred to the acceptor end of tRNA(Pro). As ProRS can inadvertently accommodate and process non-cognate amino acids such as alanine and cysteine, to avoid such errors it has two additional distinct editing activities against alanine. One activity is designated as 'pretransfer' editing and involves the tRNA(Pro)-independent hydrolysis of activated Ala-AMP. The other activity is designated 'posttransfer' editing and involves deacylation of mischarged Ala-tRNA(Pro). The misacylated Cys-tRNA(Pro) is not edited by ProRS. This Pseudomonas syringae pv. tomato (strain ATCC BAA-871 / DC3000) protein is Proline--tRNA ligase.